Consider the following 98-residue polypeptide: uncharacterized protein (98 aa).

This is an uncharacterized protein from Acidianus two-tailed virus (ATV).